A 1447-amino-acid polypeptide reads, in one-letter code: DNA-directed RNA polymerase subunit beta' (1447 aa).

Residues Cys-70, Cys-72, Cys-85, and Cys-88 each coordinate Zn(2+). Residues Asp-460, Asp-462, and Asp-464 each contribute to the Mg(2+) site. Cys-890, Cys-964, Cys-971, and Cys-974 together coordinate Zn(2+).

The protein belongs to the RNA polymerase beta' chain family. The RNAP catalytic core consists of 2 alpha, 1 beta, 1 beta' and 1 omega subunit. When a sigma factor is associated with the core the holoenzyme is formed, which can initiate transcription. The cofactor is Mg(2+). It depends on Zn(2+) as a cofactor.

The enzyme catalyses RNA(n) + a ribonucleoside 5'-triphosphate = RNA(n+1) + diphosphate. In terms of biological role, DNA-dependent RNA polymerase catalyzes the transcription of DNA into RNA using the four ribonucleoside triphosphates as substrates. The protein is DNA-directed RNA polymerase subunit beta' of Desulfosudis oleivorans (strain DSM 6200 / JCM 39069 / Hxd3) (Desulfococcus oleovorans).